Consider the following 320-residue polypeptide: dTDP-glucose 4,6-dehydratase (320 aa).

NAD(+) contacts are provided by residues 11–12 (FI), 38–41 (DKLG), 64–65 (DI), 84–88 (FAAET), and Ser-103. Thr-88 contacts substrate. A substrate-binding site is contributed by Thr-128. Residue Asp-129 is the Proton donor of the active site. Active-site proton acceptor residues include Glu-130 and Tyr-152. Position 152–156 (152–156 (YAASK)) interacts with NAD(+). Asn-181 is a binding site for substrate. Position 182 (Asn-182) interacts with NAD(+). Substrate contacts are provided by residues 191 to 192 (KM), 207 to 209 (PVY), Arg-216, Asn-251, and 274 to 278 (DRKGH).

This sequence belongs to the NAD(P)-dependent epimerase/dehydratase family. dTDP-glucose dehydratase subfamily. In terms of assembly, homodimer. The cofactor is NAD(+).

The catalysed reaction is dTDP-alpha-D-glucose = dTDP-4-dehydro-6-deoxy-alpha-D-glucose + H2O. Its function is as follows. Probably involved in the biosynthesis of the acarviose moiety of the alpha-glucosidase inhibitor acarbose. Catalyzes the dehydration of dTDP-D-glucose to form dTDP-6-deoxy-D-xylo-4-hexulose via a three-step process involving oxidation, dehydration and reduction. The sequence is that of dTDP-glucose 4,6-dehydratase from Actinoplanes sp. (strain ATCC 31044 / CBS 674.73 / SE50/110).